The sequence spans 284 residues: Acetylglutamate kinase (284 aa).

Residues 66 to 67 (GG), arginine 88, and asparagine 179 contribute to the substrate site.

It belongs to the acetylglutamate kinase family. ArgB subfamily.

The protein localises to the cytoplasm. The catalysed reaction is N-acetyl-L-glutamate + ATP = N-acetyl-L-glutamyl 5-phosphate + ADP. It participates in amino-acid biosynthesis; L-arginine biosynthesis; N(2)-acetyl-L-ornithine from L-glutamate: step 2/4. Functionally, catalyzes the ATP-dependent phosphorylation of N-acetyl-L-glutamate. The protein is Acetylglutamate kinase of Actinobacillus pleuropneumoniae serotype 5b (strain L20).